We begin with the raw amino-acid sequence, 248 residues long: UPF0246 protein FN1762 (248 aa).

Belongs to the UPF0246 family.

The chain is UPF0246 protein FN1762 from Fusobacterium nucleatum subsp. nucleatum (strain ATCC 25586 / DSM 15643 / BCRC 10681 / CIP 101130 / JCM 8532 / KCTC 2640 / LMG 13131 / VPI 4355).